The chain runs to 437 residues: 26S proteasome subunit RPT4 (437 aa).

The disordered stretch occupies residues 1-51; sequence MSEEQDPLLAGLGETSGDNHTQQSHEQQPEQPQETEEHHEEEPSRVDPEQE. At Ser2 the chain carries N-acetylserine. The segment covering 20-32 has biased composition (low complexity); it reads HTQQSHEQQPEQP. Positions 35–51 are enriched in basic and acidic residues; that stretch reads TEEHHEEEPSRVDPEQE. 222–229 contacts ATP; that stretch reads GPPGTGKT.

This sequence belongs to the AAA ATPase family. N-acetylated by NAT1.

The 26S proteasome is involved in the ATP-dependent degradation of ubiquitinated proteins. The regulatory (or ATPase) complex confers ATP dependency and substrate specificity to the 26S complex. The chain is 26S proteasome subunit RPT4 (RPT4) from Saccharomyces cerevisiae (strain ATCC 204508 / S288c) (Baker's yeast).